The primary structure comprises 96 residues: Protein RnfH (96 aa).

The protein belongs to the UPF0125 (RnfH) family.

The chain is Protein RnfH from Salmonella agona (strain SL483).